The primary structure comprises 339 residues: Ketol-acid reductoisomerase (NADP(+)) (339 aa).

In terms of domain architecture, KARI N-terminal Rossmann spans 1-182 (MRVYYDRDAD…GGGRAGIIET (182 aa)). NADP(+) is bound by residues 24 to 27 (YGSQ), Arg48, Ser51, Ser53, and 83 to 86 (DELQ). Residue His108 is part of the active site. Gly134 is an NADP(+) binding site. The 146-residue stretch at 183–328 (TFKEECETDL…ERLRAMMPWI (146 aa)) folds into the KARI C-terminal knotted domain. Mg(2+) contacts are provided by Asp191, Glu195, Glu227, and Glu231. Ser252 lines the substrate pocket.

Belongs to the ketol-acid reductoisomerase family. Mg(2+) serves as cofactor.

The catalysed reaction is (2R)-2,3-dihydroxy-3-methylbutanoate + NADP(+) = (2S)-2-acetolactate + NADPH + H(+). It carries out the reaction (2R,3R)-2,3-dihydroxy-3-methylpentanoate + NADP(+) = (S)-2-ethyl-2-hydroxy-3-oxobutanoate + NADPH + H(+). The protein operates within amino-acid biosynthesis; L-isoleucine biosynthesis; L-isoleucine from 2-oxobutanoate: step 2/4. Its pathway is amino-acid biosynthesis; L-valine biosynthesis; L-valine from pyruvate: step 2/4. In terms of biological role, involved in the biosynthesis of branched-chain amino acids (BCAA). Catalyzes an alkyl-migration followed by a ketol-acid reduction of (S)-2-acetolactate (S2AL) to yield (R)-2,3-dihydroxy-isovalerate. In the isomerase reaction, S2AL is rearranged via a Mg-dependent methyl migration to produce 3-hydroxy-3-methyl-2-ketobutyrate (HMKB). In the reductase reaction, this 2-ketoacid undergoes a metal-dependent reduction by NADPH to yield (R)-2,3-dihydroxy-isovalerate. This chain is Ketol-acid reductoisomerase (NADP(+)), found in Methylobacterium nodulans (strain LMG 21967 / CNCM I-2342 / ORS 2060).